A 422-amino-acid polypeptide reads, in one-letter code: Glutamyl-tRNA reductase (422 aa).

Substrate-binding positions include 49–52 (TCNR), Ser-107, 112–114 (EPQ), and Gln-118. Cys-50 functions as the Nucleophile in the catalytic mechanism. 187–192 (GAGETI) provides a ligand contact to NADP(+).

Belongs to the glutamyl-tRNA reductase family. In terms of assembly, homodimer.

The enzyme catalyses (S)-4-amino-5-oxopentanoate + tRNA(Glu) + NADP(+) = L-glutamyl-tRNA(Glu) + NADPH + H(+). It functions in the pathway porphyrin-containing compound metabolism; protoporphyrin-IX biosynthesis; 5-aminolevulinate from L-glutamyl-tRNA(Glu): step 1/2. Functionally, catalyzes the NADPH-dependent reduction of glutamyl-tRNA(Glu) to glutamate 1-semialdehyde (GSA). The protein is Glutamyl-tRNA reductase of Stutzerimonas stutzeri (strain A1501) (Pseudomonas stutzeri).